The sequence spans 853 residues: Transcription factor CPH2 (853 aa).

2 disordered regions span residues 165–209 and 296–353; these read EPPI…DKNS and NMNP…VHHP. Residues 180–194 are compositionally biased toward low complexity; that stretch reads TTTVSSTNSITNTTK. The region spanning 205 to 274 is the bHLH domain; sequence KDKNSHNMIE…TKATEYIKHL (70 aa). Over residues 301–315 the composition is skewed to pro residues; it reads SLPPPPQQMQAPPQP. Positions 330–352 are enriched in low complexity; sequence TPASQYPSPQQQVSPTQQQTVHH.

Its subcellular location is the nucleus. In terms of biological role, transcription factor that positively controls filamentous growth, virulence, and invasiveness. Binds directly to the two SRE-1-like elements upstream of TEC1 and thus positively regulates expression of this important hyphal growth regulator. Functions independently of known signaling cascades involving EFG1. Also regulates gene expression during intestinal colonization but is not involved in host cell adhesion. The chain is Transcription factor CPH2 (CPH2) from Candida albicans (strain SC5314 / ATCC MYA-2876) (Yeast).